The sequence spans 141 residues: MAKKVIGQIKLQIPAGKATPAPPVGPALGQHGVNIMGFTKEFNAKTADQAGMIIPVVITVYQDRSFSFITKTPPAAVLIKKALNLKSGSGEPNKKKVAKMTSAQVREIAELKMPDLNAASVEAAMSMIAGTARSMGVVIED.

Belongs to the universal ribosomal protein uL11 family. As to quaternary structure, part of the ribosomal stalk of the 50S ribosomal subunit. Interacts with L10 and the large rRNA to form the base of the stalk. L10 forms an elongated spine to which L12 dimers bind in a sequential fashion forming a multimeric L10(L12)X complex. Post-translationally, one or more lysine residues are methylated.

In terms of biological role, forms part of the ribosomal stalk which helps the ribosome interact with GTP-bound translation factors. The sequence is that of Large ribosomal subunit protein uL11 from Clostridioides difficile (strain 630) (Peptoclostridium difficile).